The following is a 2253-amino-acid chain: Polycystin family receptor for egg jelly (2253 aa).

Residues 1 to 19 (MRPGPALLLLGVGLSLSVG) form the signal peptide. Residues 20-1184 (RLPLPPVPRG…NIIKSLHQNP (1165 aa)) lie on the Extracellular side of the membrane. The segment covering 154–169 (RPASPAARVSPRSAAP) has biased composition (low complexity). A disordered region spans residues 154-177 (RPASPAARVSPRSAAPGPRPQQGF). N-linked (GlcNAc...) asparagine glycosylation is found at Asn197, Asn242, Asn295, Asn306, Asn345, Asn349, Asn481, Asn674, Asn849, Asn890, Asn923, Asn939, Asn958, and Asn965. Residues 215–913 (CVIQRVRINT…STMFCDFTND (699 aa)) form the REJ domain. The helical transmembrane segment at 1185 to 1205 (VTLFTVLFIILLYVGLAFWAL) threads the bilayer. At 1206–1389 (YRDEMDQHLR…VAKTFNRLQR (184 aa)) the chain is on the cytoplasmic side. The PLAT domain occupies 1230-1347 (LCYLVTIFTG…TLDRTFHVTH (118 aa)). A helical transmembrane segment spans residues 1390–1410 (LSCCLAMLLSSLLCNIMFFNL). At 1411 to 1427 (NRQEQTESRERKYMRSM) the chain is on the extracellular side. A helical membrane pass occupies residues 1428–1448 (MIGIESVLITIPVQLLITFLF). Residues 1449–1576 (TCSQRKPQAD…KPRIVLPWWC (128 aa)) are Cytoplasmic-facing. A disordered region spans residues 1494–1562 (PREVAKPASK…EQHPSQKDLQ (69 aa)). A compositionally biased stretch (basic residues) spans 1517–1527 (SKPKHRHRKAQ). Residues 1549–1558 (DVHSEQHPSQ) show a composition bias toward basic and acidic residues. A helical membrane pass occupies residues 1577-1597 (VYVAWFLVFATSSISSFFIVF). Residues 1598 to 1607 (YGLTYGYDKS) lie on the Extracellular side of the membrane. A helical membrane pass occupies residues 1608–1628 (IEWLFASFCSFCQSVLLVQPS). The Cytoplasmic segment spans residues 1629 to 1708 (KIILLSGFRT…RKKRIKRRAL (80 aa)). The helical transmembrane segment at 1709 to 1729 (LFLSYILTHFIFLALLLILIV) threads the bilayer. The Extracellular segment spans residues 1730–1966 (LLRHTDCFYY…FDRKASAEIY (237 aa)). 3 N-linked (GlcNAc...) asparagine glycosylation sites follow: Asn1836, Asn1893, and Asn1944. Residues 1967–1987 (LYVAILIFFLAYVVDEGCIIM) form a helical membrane-spanning segment. At 1988-1996 (QERASYVRS) the chain is on the cytoplasmic side. Residues 1997 to 2017 (VYNLLNFALKCIFTVLIVLFL) form a helical membrane-spanning segment. Residues 2018–2042 (RKHFLATGIIRFYLSNPEDFIPFHA) are Extracellular-facing. A helical membrane pass occupies residues 2043–2063 (VSQVDHIMRIILGFLLFLTIL). Residues 2064 to 2091 (KTLRYSRFFYDVRLAQRAIQAALPGICH) lie on the Cytoplasmic side of the membrane. Residues 2092 to 2112 (MAFVVSVYFFVYMAFGYLVFG) traverse the membrane as a helical segment. Over 2113-2145 (QHEWNYSNLIHSTQTVFSYCVSAFQNTEFSNNR) the chain is Extracellular. A helical membrane pass occupies residues 2146 to 2166 (ILGVLFLSSFMLVMICVLINL). Topologically, residues 2167–2253 (FQAVILSAYE…NGKKMVYLVV (87 aa)) are cytoplasmic.

Belongs to the polycystin family. As to expression, exclusively expressed in testis.

The protein localises to the cell membrane. It is found in the cytoplasmic vesicle. The protein resides in the secretory vesicle. It localises to the acrosome membrane. Its subcellular location is the nucleus. Testis-specific protein that controls sperm transport and the timing of zona pellucida-evoked exocytosis of the sperm acrosome. This chain is Polycystin family receptor for egg jelly, found in Homo sapiens (Human).